Here is a 476-residue protein sequence, read N- to C-terminus: RNA-splicing ligase RtcB homolog (476 aa).

5 residues coordinate Mn(2+): Asp-90, Cys-93, His-198, His-230, and His-324. 197–201 (NHYAE) provides a ligand contact to GMP. GMP is bound by residues 324–325 (HN), 373–376 (GGTM), Ser-380, 399–402 (HGAG), and Lys-475. The GMP-histidine intermediate role is filled by His-399.

The protein belongs to the RtcB family. Catalytic component of the tRNA-splicing ligase complex. Requires Mn(2+) as cofactor.

The catalysed reaction is a 3'-end 3'-phospho-ribonucleotide-RNA + a 5'-end dephospho-ribonucleoside-RNA + GTP = a ribonucleotidyl-ribonucleotide-RNA + GMP + diphosphate. It carries out the reaction a 3'-end 2',3'-cyclophospho-ribonucleotide-RNA + a 5'-end dephospho-ribonucleoside-RNA + GTP + H2O = a ribonucleotidyl-ribonucleotide-RNA + GMP + diphosphate + H(+). Functionally, catalytic subunit of the tRNA-splicing ligase complex that acts by directly joining spliced tRNA halves to mature-sized tRNAs by incorporating the precursor-derived splice junction phosphate into the mature tRNA as a canonical 3',5'-phosphodiester. May act as an RNA ligase with broad substrate specificity, and may function toward other RNAs. The protein is RNA-splicing ligase RtcB homolog of Chlamydomonas reinhardtii (Chlamydomonas smithii).